Consider the following 447-residue polypeptide: Mannose/glucose-specific lectin (447 aa).

Tandem repeats lie at residues 1 to 149, 150 to 295, and 296 to 447. A 3 X approximate tandem repeats region spans residues 1–447; the sequence is SLKGMISVGP…GIFVKPDTAV (447 aa). Jacalin-type lectin domains are found at residues 5–148, 153–294, and 300–443; these read MISV…FVQP, TISF…YVKP, and SISI…FVKP.

This sequence belongs to the jacalin lectin family. As to quaternary structure, homodimer. Post-translationally, the N-terminus is blocked.

Mannose/glucose specific lectin. Shows agglutinating activity against rabbit erythrocytes. This is Mannose/glucose-specific lectin from Parkia platycephala.